The primary structure comprises 293 residues: Protein orai (293 aa).

The Cytoplasmic segment spans residues 1–122 (MPRSHDPSRV…RAQLKASSRT (122 aa)). Residues 62 to 81 (STAGGGSRNGVGSKEGSVTS) form a disordered region. Residues 123–141 (SALLAGFAMVCLVELQYDQ) traverse the membrane as a helical segment. At 142–146 (STPKP) the chain is on the extracellular side. Residues 147 to 167 (LLIVLGVVTSLLVSVHLLALM) traverse the membrane as a helical segment. At 168-198 (MSTCILPYMEATGCTQDSPHIKLKFYIDLSW) the chain is on the cytoplasmic side. The chain crosses the membrane as a helical span at residues 199–219 (LFSTCIGLLLFLVEIGVIFYV). The Extracellular segment spans residues 220 to 230 (KFTAVGYPTAG). The helical transmembrane segment at 231 to 251 (YITTAMLVPVGVVFVVFSYLI) threads the bilayer. Residues 252 to 293 (HKNRVSHSLGRFKHKVDTMKQFLDVEANLQKSTLAPSTIRDI) are Cytoplasmic-facing.

This sequence belongs to the Orai family. As to expression, expressed in gonad sheath cells, hypodermis, intestine and spermatheca. Coexpressed with stim-1.

Its subcellular location is the membrane. Functionally, ca(2+) release-activated Ca(2+)-like (CRAC-like) channel subunit which mediates Ca(2+) influx and increase in Ca(2+)-selective current by synergy with the Ca(2+) sensor, stim-1. Required for Ca(2+) and IP3-dependent contractile activity of sheath cells and the spermatheca. Affects brood size and somatic cell function. The protein is Protein orai (orai-1) of Caenorhabditis elegans.